Here is a 406-residue protein sequence, read N- to C-terminus: tRNA-specific 2-thiouridylase MnmA (406 aa).

Residues 42 to 49 (GLSGGVDS) and leucine 68 contribute to the ATP site. Cysteine 129 acts as the Nucleophile in catalysis. A disulfide bond links cysteine 129 and cysteine 237. Glycine 154 lines the ATP pocket. The interval 187 to 189 (KDQ) is interaction with tRNA. Cysteine 237 acts as the Cysteine persulfide intermediate in catalysis. The interaction with tRNA stretch occupies residues 342-343 (RY).

It belongs to the MnmA/TRMU family.

It localises to the cytoplasm. The enzyme catalyses S-sulfanyl-L-cysteinyl-[protein] + uridine(34) in tRNA + AH2 + ATP = 2-thiouridine(34) in tRNA + L-cysteinyl-[protein] + A + AMP + diphosphate + H(+). In terms of biological role, catalyzes the 2-thiolation of uridine at the wobble position (U34) of tRNA, leading to the formation of s(2)U34. The chain is tRNA-specific 2-thiouridylase MnmA from Prochlorococcus marinus (strain MIT 9211).